Consider the following 95-residue polypeptide: Large ribosomal subunit protein uL23c (95 aa).

This sequence belongs to the universal ribosomal protein uL23 family. In terms of assembly, part of the 50S ribosomal subunit.

It is found in the plastid. It localises to the chloroplast. Its function is as follows. Binds to 23S rRNA. The chain is Large ribosomal subunit protein uL23c (rpl23) from Guillardia theta (Cryptophyte).